Reading from the N-terminus, the 312-residue chain is Aspartate carbamoyltransferase catalytic subunit (312 aa).

Residues Arg55 and Thr56 each contribute to the carbamoyl phosphate site. Residue Lys83 coordinates L-aspartate. Residues Arg105, His138, and Gln141 each coordinate carbamoyl phosphate. 2 residues coordinate L-aspartate: Arg171 and Arg225. Residues Gly266 and Pro267 each contribute to the carbamoyl phosphate site.

This sequence belongs to the aspartate/ornithine carbamoyltransferase superfamily. ATCase family. In terms of assembly, heterododecamer (2C3:3R2) of six catalytic PyrB chains organized as two trimers (C3), and six regulatory PyrI chains organized as three dimers (R2).

It catalyses the reaction carbamoyl phosphate + L-aspartate = N-carbamoyl-L-aspartate + phosphate + H(+). It participates in pyrimidine metabolism; UMP biosynthesis via de novo pathway; (S)-dihydroorotate from bicarbonate: step 2/3. Its function is as follows. Catalyzes the condensation of carbamoyl phosphate and aspartate to form carbamoyl aspartate and inorganic phosphate, the committed step in the de novo pyrimidine nucleotide biosynthesis pathway. This Corynebacterium glutamicum (strain R) protein is Aspartate carbamoyltransferase catalytic subunit.